The sequence spans 416 residues: MAGIVACILLVFVTVITAQQQAVFLEYIQGRMGVLEERLSQWHDQSSRYSGELRDFKNQVLKMLENIEKERESLRNEMENTNVRVDRLEREVDYIETQNPAPPCVEIDEKLTELHDAKKKKKEKYEKITGCPAADIPGKEETDEILIPPVIRKPYCSDTISQVTAMKILKRFGSSAGLWTKDLAGNSDRIYVFDGAGNDTVYVYPRMKEFTLSSSTRKAAKIKLPFPWIGTGHIVYDGNLYYIRQDNEFQVIKFNLANKTIIDSAVLPIEQQVPVYGLSKFNYIDIVADEEGLWVIYATKENEKNICLAKLDPSSLSIEQMWDTPCPIENAESAFVVCGSLYVVYNTKLPSRSRIQCVFDVSGTISSENVPIVYFPKRYGSHSSMKYNPKEKQIYAWDDGYQMLYKLNMKHRDELY.

The signal sequence occupies residues 1–18 (MAGIVACILLVFVTVITA). Residues 48 to 129 (RYSGELRDFK…KKKEKYEKIT (82 aa)) are a coiled coil. One can recognise an Olfactomedin-like domain in the interval 155–411 (YCSDTISQVT…QMLYKLNMKH (257 aa)). Cysteines 156 and 338 form a disulfide. N-linked (GlcNAc...) asparagine glycans are attached at residues Asn198 and Asn258.

This sequence belongs to the OLFML3 family. As to quaternary structure, interacts (via coiled coil domain) with BMP1 and (via olfactomedin-like domain) CHRD.

The protein localises to the secreted. Functionally, secreted scaffold protein that plays an essential role in dorsoventral patterning during early development. Stabilizes axial formation by restricting chordin (CHRD) activity on the dorsal side. Acts by facilitating the association between the tolloid protease BMP1 and its substrate chordin (CHRD), leading to enhance chordin (CHRD) degradation by BMP1. The protein is Olfactomedin-like protein 3 (olfml3) of Xenopus tropicalis (Western clawed frog).